The following is a 462-amino-acid chain: Keratin, type I cytoskeletal 28 (462 aa).

Positions 1–26 (MSLRFSGGSRHVGIQSGSLRPPSGGA) are disordered. Residues 1 to 83 (MSLRFSGGSR…GSEGGLLSGN (83 aa)) form a head region. A coil 1A region spans residues 84-119 (EKVTMQNLNNRLASYLDNVKALEEANSELERKIKTW). In terms of domain architecture, IF rod spans 84-399 (EKVTMQNLNN…RLIDGDENSC (316 aa)). Positions 120-141 (HEKYGPGSCRGLDRDYSKYHLT) are linker 1. The interval 142-233 (IEDLKSKIIS…KNHEEEMKVL (92 aa)) is coil 1B. Positions 234 to 256 (QCAAGGNVNVEMNAAPGVDLTVL) are linker 12. Residues 257 to 395 (LNNMRAEYEA…ETYCRLIDGD (139 aa)) are coil 2. The tail stretch occupies residues 396-462 (ENSCSVSKGF…NGKAEQRVPF (67 aa)).

It belongs to the intermediate filament family. As to quaternary structure, heterotetramer of two type I and two type II keratins. As to expression, in the hair follicle and bulb, uniformly expressed in all three layers of the inner root sheath (the Henle layer, the Huxley layer and the cuticle) and observed in matrix cells (at protein level).

It localises to the cytoplasm. Functionally, essential for the proper assembly of types I and II keratin protein complexes and the formation of keratin intermediate filaments in the inner root sheath (irs). This chain is Keratin, type I cytoskeletal 28, found in Mus musculus (Mouse).